Reading from the N-terminus, the 205-residue chain is Holliday junction branch migration complex subunit RuvA (205 aa).

Residues 1–64 form a domain I region; it reads MIGKLKGVVD…EDMIRLYGFR (64 aa). The domain II stretch occupies residues 65–143; that stretch reads SDAEREWFRL…AFAPVDPALV (79 aa). The interval 144–152 is flexible linker; the sequence is RLAGAVEAR. Positions 153-205 are domain III; it reads TAPQPVADAISALVNLGYPQAQASAAVAAALQSAGAEAEAKTLIRLGLRELAR.

Belongs to the RuvA family. As to quaternary structure, homotetramer. Forms an RuvA(8)-RuvB(12)-Holliday junction (HJ) complex. HJ DNA is sandwiched between 2 RuvA tetramers; dsDNA enters through RuvA and exits via RuvB. An RuvB hexamer assembles on each DNA strand where it exits the tetramer. Each RuvB hexamer is contacted by two RuvA subunits (via domain III) on 2 adjacent RuvB subunits; this complex drives branch migration. In the full resolvosome a probable DNA-RuvA(4)-RuvB(12)-RuvC(2) complex forms which resolves the HJ.

The protein resides in the cytoplasm. The RuvA-RuvB-RuvC complex processes Holliday junction (HJ) DNA during genetic recombination and DNA repair, while the RuvA-RuvB complex plays an important role in the rescue of blocked DNA replication forks via replication fork reversal (RFR). RuvA specifically binds to HJ cruciform DNA, conferring on it an open structure. The RuvB hexamer acts as an ATP-dependent pump, pulling dsDNA into and through the RuvAB complex. HJ branch migration allows RuvC to scan DNA until it finds its consensus sequence, where it cleaves and resolves the cruciform DNA. This Methylobacterium sp. (strain 4-46) protein is Holliday junction branch migration complex subunit RuvA.